The sequence spans 116 residues: Ribonuclease P protein component (116 aa).

It belongs to the RnpA family. As to quaternary structure, consists of a catalytic RNA component (M1 or rnpB) and a protein subunit.

The catalysed reaction is Endonucleolytic cleavage of RNA, removing 5'-extranucleotides from tRNA precursor.. In terms of biological role, RNaseP catalyzes the removal of the 5'-leader sequence from pre-tRNA to produce the mature 5'-terminus. It can also cleave other RNA substrates such as 4.5S RNA. The protein component plays an auxiliary but essential role in vivo by binding to the 5'-leader sequence and broadening the substrate specificity of the ribozyme. This Acholeplasma laidlawii (strain PG-8A) protein is Ribonuclease P protein component.